Reading from the N-terminus, the 353-residue chain is GDSL esterase/lipase At5g03810 (353 aa).

A signal peptide spans 1 to 24 (MKMFITMSMCLSVIACFYAGVGTG). The active-site Nucleophile is the S37. N-linked (GlcNAc...) asparagine glycans are attached at residues N100, N255, N256, N260, and N320. Active-site residues include D328 and H331.

The protein belongs to the 'GDSL' lipolytic enzyme family.

The protein localises to the secreted. The polypeptide is GDSL esterase/lipase At5g03810 (Arabidopsis thaliana (Mouse-ear cress)).